The following is a 124-amino-acid chain: MRHYEIVFIVHPDQSEQVPAMIERYKQLVTSQNGQIHRVEDWGRRQMAYMIQKLAKAHYVCLNIECGKDTLAELEHAFKFNDAVLRHLIVQTKKAETAPSPMMKEVQREEARKAAQTTTEGQPA.

Residues 96–124 (ETAPSPMMKEVQREEARKAAQTTTEGQPA) form a disordered region. Residues 115–124 (AQTTTEGQPA) are compositionally biased toward polar residues.

The protein belongs to the bacterial ribosomal protein bS6 family.

Binds together with bS18 to 16S ribosomal RNA. In Cupriavidus metallidurans (strain ATCC 43123 / DSM 2839 / NBRC 102507 / CH34) (Ralstonia metallidurans), this protein is Small ribosomal subunit protein bS6.